The primary structure comprises 213 residues: Uridine kinase (213 aa).

15–22 contributes to the ATP binding site; the sequence is GASASGKS.

This sequence belongs to the uridine kinase family.

The protein resides in the cytoplasm. The enzyme catalyses uridine + ATP = UMP + ADP + H(+). It carries out the reaction cytidine + ATP = CMP + ADP + H(+). The protein operates within pyrimidine metabolism; CTP biosynthesis via salvage pathway; CTP from cytidine: step 1/3. Its pathway is pyrimidine metabolism; UMP biosynthesis via salvage pathway; UMP from uridine: step 1/1. The polypeptide is Uridine kinase (Escherichia coli O157:H7).